The sequence spans 121 residues: C-type natriuretic peptide 4 (121 aa).

Residues 1–22 form the signal peptide; that stretch reads MNLSYLVACGLLVTFLSDKMDA. Residues 23-96 constitute a propeptide that is removed on maturation; it reads QPLTPAQQKS…SRRHKSGSKK (74 aa). Positions 80–109 are disordered; the sequence is LLNDQPASRRHKSGSKKGGSTSRSGCFGHK. The cysteines at positions 105 and 121 are disulfide-linked.

Belongs to the natriuretic peptide family. Brain, spinal cord, spleen, heart and fin, and to a lower extent in gill and ovary.

Its subcellular location is the secreted. Functionally, exhibits natriuretic and vasodepressant activity. Has cGMP-stimulating activity. May help to regulate body fluid homeostasis in a variety of aquatic environments. The chain is C-type natriuretic peptide 4 from Oryzias latipes (Japanese rice fish).